A 220-amino-acid chain; its full sequence is Large ribosomal subunit protein uL3 (220 aa).

The disordered stretch occupies residues 137–159; sequence GASHGAHKNHRKPGSIGGASTPS.

Belongs to the universal ribosomal protein uL3 family. Part of the 50S ribosomal subunit. Forms a cluster with proteins L14 and L19.

In terms of biological role, one of the primary rRNA binding proteins, it binds directly near the 3'-end of the 23S rRNA, where it nucleates assembly of the 50S subunit. This Renibacterium salmoninarum (strain ATCC 33209 / DSM 20767 / JCM 11484 / NBRC 15589 / NCIMB 2235) protein is Large ribosomal subunit protein uL3.